A 558-amino-acid polypeptide reads, in one-letter code: Galactoside 2-alpha-L-fucosyltransferase (558 aa).

Over 1–43 (MDQNSYRRRSSPIRTTTGGSKSVNFSELLQMKYLSSGTMKLTR) the chain is Cytoplasmic. A helical; Signal-anchor for type II membrane protein transmembrane segment spans residues 44–64 (TFTTCLIVFSVLVAFSMIFHQ). The Lumenal segment spans residues 65-558 (HPSDSNRIMG…EDISWGLKLV (494 aa)). N-linked (GlcNAc...) asparagine glycosylation is found at Asn-88 and Asn-504.

This sequence belongs to the glycosyltransferase 37 family. In terms of assembly, homodimer. Interacts with MUR3, XLT2, XXT2 and XXT5. As to expression, expressed in roots, stems, leaves, flowers, siliques and seedlings.

The protein resides in the golgi apparatus. The protein localises to the golgi stack membrane. It localises to the golgi apparatus membrane. Its function is as follows. Involved in cell wall biosynthesis. Is both necessary and sufficient for the addition of the terminal fucosyl residue on xyloglucan side chains, but is not involved in the fucosylation of other cell wall components. Associates with other xyloglucan-synthesizing enzymes to form multiprotein complexes for xyloglucan synthesis in the Golgi. The polypeptide is Galactoside 2-alpha-L-fucosyltransferase (FUT1) (Arabidopsis thaliana (Mouse-ear cress)).